The sequence spans 242 residues: Ribosomal RNA small subunit methyltransferase G (242 aa).

S-adenosyl-L-methionine is bound by residues glycine 78, phenylalanine 83, 129 to 130 (AE), and arginine 148.

The protein belongs to the methyltransferase superfamily. RNA methyltransferase RsmG family.

It is found in the cytoplasm. In terms of biological role, specifically methylates the N7 position of a guanine in 16S rRNA. This chain is Ribosomal RNA small subunit methyltransferase G, found in Lachnoclostridium phytofermentans (strain ATCC 700394 / DSM 18823 / ISDg) (Clostridium phytofermentans).